A 100-amino-acid polypeptide reads, in one-letter code: Urease subunit gamma (100 aa).

This sequence belongs to the urease gamma subunit family. Heterotrimer of UreA (gamma), UreB (beta) and UreC (alpha) subunits. Three heterotrimers associate to form the active enzyme.

The protein localises to the cytoplasm. The enzyme catalyses urea + 2 H2O + H(+) = hydrogencarbonate + 2 NH4(+). The protein operates within nitrogen metabolism; urea degradation; CO(2) and NH(3) from urea (urease route): step 1/1. The sequence is that of Urease subunit gamma from Nitrosospira multiformis (strain ATCC 25196 / NCIMB 11849 / C 71).